Consider the following 344-residue polypeptide: Heat-inducible transcription repressor HrcA (344 aa).

This sequence belongs to the HrcA family.

Functionally, negative regulator of class I heat shock genes (grpE-dnaK-dnaJ and groELS operons). Prevents heat-shock induction of these operons. The polypeptide is Heat-inducible transcription repressor HrcA (Moorella thermoacetica (strain ATCC 39073 / JCM 9320)).